We begin with the raw amino-acid sequence, 43 residues long: MSDKPDLAEVSNFDKTKLKKTETQEKNPLPTKETIEQEKQATA.

Composition is skewed to basic and acidic residues over residues 1-25 (MSDKPDLAEVSNFDKTKLKKTETQE) and 33-43 (ETIEQEKQATA). Residues 1-43 (MSDKPDLAEVSNFDKTKLKKTETQEKNPLPTKETIEQEKQATA) are disordered. Ser2 is modified (N-acetylserine).

Belongs to the thymosin beta family.

The protein resides in the cytoplasm. It localises to the cytoskeleton. Functionally, plays an important role in the organization of the cytoskeleton. Binds to and sequesters actin monomers (G actin) and therefore inhibits actin polymerization. This Oncorhynchus mykiss (Rainbow trout) protein is Thymosin beta-12.